The chain runs to 500 residues: Probable cytosol aminopeptidase (500 aa).

Residues lysine 265 and aspartate 270 each coordinate Mn(2+). The active site involves lysine 277. Residues aspartate 288, aspartate 347, and glutamate 349 each contribute to the Mn(2+) site. Arginine 351 is a catalytic residue.

This sequence belongs to the peptidase M17 family. It depends on Mn(2+) as a cofactor.

The protein localises to the cytoplasm. The catalysed reaction is Release of an N-terminal amino acid, Xaa-|-Yaa-, in which Xaa is preferably Leu, but may be other amino acids including Pro although not Arg or Lys, and Yaa may be Pro. Amino acid amides and methyl esters are also readily hydrolyzed, but rates on arylamides are exceedingly low.. It carries out the reaction Release of an N-terminal amino acid, preferentially leucine, but not glutamic or aspartic acids.. In terms of biological role, presumably involved in the processing and regular turnover of intracellular proteins. Catalyzes the removal of unsubstituted N-terminal amino acids from various peptides. This is Probable cytosol aminopeptidase from Rickettsia typhi (strain ATCC VR-144 / Wilmington).